Reading from the N-terminus, the 735-residue chain is Protostadienol synthase A (735 aa).

The PFTB 1 repeat unit spans residues 129–170 (KNEMIRYLLNFVNEDGGWGLWINSPSTVFGTTMNYTMLRILG). Asp460 serves as the catalytic Proton donor. PFTB repeat units lie at residues 487-528 (LAEA…YDNV), 564-604 (MARC…ETVG), and 613-660 (CRNA…ALMG).

It belongs to the terpene cyclase/mutase family.

It catalyses the reaction (S)-2,3-epoxysqualene = (17Z)-protosta-17(20),24-dien-3beta-ol. Its function is as follows. Protostadienol synthase which cyclizes (3S)-oxidosqualene to (17Z)-protosta-17(20),24-dien-3-beta-ol (protostadienol), the biosynthetic precursor of helvolic acid, a secondary metabolite which promotes virulence. The protein is Protostadienol synthase A (PDSA) of Arthroderma gypseum (strain ATCC MYA-4604 / CBS 118893) (Microsporum gypseum).